Reading from the N-terminus, the 159-residue chain is MPNKEEKIYLTADSFKQYQERLQYLQEVLRPQVIEEIKEARNQGDLSENAEYDAARDKQATIENEITEIQHILDNYEIIKTQTNRQVSVVRIGSNVSVVSLKDDTVINFQIVGALDTDPFNGKISNTSPLAKAVIGRKAGEVVEVEAPNKYQVKIVHVG.

Positions Ser47–Glu77 form a coiled coil.

Belongs to the GreA/GreB family.

Its function is as follows. Necessary for efficient RNA polymerase transcription elongation past template-encoded arresting sites. The arresting sites in DNA have the property of trapping a certain fraction of elongating RNA polymerases that pass through, resulting in locked ternary complexes. Cleavage of the nascent transcript by cleavage factors such as GreA or GreB allows the resumption of elongation from the new 3'terminus. GreA releases sequences of 2 to 3 nucleotides. The sequence is that of Transcription elongation factor GreA from Metamycoplasma arthritidis (strain 158L3-1) (Mycoplasma arthritidis).